Consider the following 417-residue polypeptide: 3-oxoacyl-[acyl-carrier-protein] synthase 2 (417 aa).

A Ketosynthase family 3 (KS3) domain is found at Phe-10–Arg-416. Active-site for beta-ketoacyl synthase activity residues include Cys-170, His-311, and His-346.

This sequence belongs to the thiolase-like superfamily. Beta-ketoacyl-ACP synthases family.

The protein localises to the cytoplasm. The catalysed reaction is an ultra-long-chain di-unsaturated fatty acyl-[ACP] + malonyl-[ACP] + H(+) = a 3-oxo-ultra-long-chain di-unsaturated fatty acyl-[ACP] + holo-[ACP] + CO2. It participates in lipid metabolism; mycolic acid biosynthesis. Part of the mycobacterial fatty acid elongation system FAS-II, which is involved in mycolic acid biosynthesis. Catalyzes the elongation of long chain acyl-ACP substrates by the addition of two carbons from malonyl-ACP to an acyl acceptor. Involved in extension of the mycolate chains to full lengths and produces longer chain multiunsaturated hydrocarbons averaging 54 carbons in length. This chain is 3-oxoacyl-[acyl-carrier-protein] synthase 2 (kasB), found in Mycobacterium bovis (strain ATCC BAA-935 / AF2122/97).